We begin with the raw amino-acid sequence, 618 residues long: MDLKTAVFNAARDGKLKLLQKLLENKSDREVLKLMAEKTNGATPLLMASRYGHLELVEFLMECCCAPVELGGSVNFDGEVIEGAPPLWAASAAGHLKVVQSLLGHGASVNNTTLTNSTPLRAACFDGHLDIVRYLVEHQADLEVANRHGHTCLMISCYKGHREIAQFLLEKGADVNRRSVKGNTALHDCAESGSLEIMKMLLKFGASMEKDGYGMTPLLSASVTGHTNIVDFLTAHPQTGLAERISALELLGATFVDKKRDLLGALQYWKRAMELRHSEADCMRREEPLEPEPAYDCSREVSTAEELDGLIADPDDMRMQALLIRERILGPAHPDTSYYIRYRGAVYADSGNFERCIRLWKYALDMQQSNLEPLSPMTASSLLSFAELFSFMLQDRAKGLLGAGVSFQQLMEILCRSVLEIERAVKQPRPSPDPDPAQLSKLLSIILHLICLLEKLPCSPEQDQHKKETIYRFLKLQACGRNGFSPLHLAVDHNTTCVGRYPVCKFPSLQVASVLLECGADVNSRDLDDNSPLHVAASNNHPDIMKLLISGGTHFDSTNALQQTACDLLDHTQLAKSLIQPINHTTLQCLAARAIIRHRLVYRGSIPERLEAFVLLHR.

ANK repeat units lie at residues 2 to 31 (DLKTAVFNAARDGKLKLLQKLLENKSDREV), 40 to 70 (NGATPLLMASRYGHLELVEFLMECCCAPVEL), 82 to 111 (EGAPPLWAASAAGHLKVVQSLLGHGASVNN), 115 to 144 (TNSTPLRAACFDGHLDIVRYLVEHQADLEV), 148 to 177 (HGHTCLMISCYKGHREIAQFLLEKGADVNR), 181 to 210 (KGNTALHDCAESGSLEIMKMLLKFGASMEK), and 213 to 243 (YGMTPLLSASVTGHTNIVDFLTAHPQTGLAE). TPR repeat units follow at residues 245 to 279 (ISALELLGATFVDKKRDLLGALQYWKRAMELRHSE) and 337 to 370 (SYYIRYRGAVYADSGNFERCIRLWKYALDMQQSN). 2 ANK repeats span residues 482 to 524 (NGFS…DVNS) and 528 to 557 (DDNSPLHVAASNNHPDIMKLLISGGTHFDS).

The protein belongs to the fem-1 family. In terms of assembly, component of a CRL2 E3 ubiquitin-protein ligase complex, also named ECS (Elongin BC-CUL2/5-SOCS-box protein) complex.

The protein operates within protein modification; protein ubiquitination. In terms of biological role, substrate-recognition component of a Cul2-RING (CRL2) E3 ubiquitin-protein ligase complex of the DesCEND (destruction via C-end degrons) pathway, which recognizes a C-degron located at the extreme C terminus of target proteins, leading to their ubiquitination and degradation. The C-degron recognized by the DesCEND pathway is usually a motif of less than ten residues and can be present in full-length proteins, truncated proteins or proteolytically cleaved forms. The CRL2(FEM1C) complex specifically recognizes proteins with an arginine at the C-terminus: recognizes and binds proteins ending with -Lys/Arg-Xaa-Arg and -Lys/Arg-Xaa-Xaa-Arg C-degrons, leading to their ubiquitination and degradation. The sequence is that of Protein fem-1 homolog C from Danio rerio (Zebrafish).